Reading from the N-terminus, the 152-residue chain is Transcriptional regulator MraZ (152 aa).

SpoVT-AbrB domains are found at residues 5 to 52 (ASAI…PADE) and 81 to 124 (AHEI…DEAQ).

This sequence belongs to the MraZ family. As to quaternary structure, forms oligomers.

It localises to the cytoplasm. Its subcellular location is the nucleoid. The polypeptide is Transcriptional regulator MraZ (Shewanella amazonensis (strain ATCC BAA-1098 / SB2B)).